Consider the following 109-residue polypeptide: Spermidine export protein MdtI (109 aa).

4 consecutive transmembrane segments (helical) span residues 6 to 26 (WIHGAWLGLAIMLEIAANVLL), 36 to 56 (CYGILSLAAVLAAFSALSQAV), 64 to 84 (AYALWGGFGIAATLAAGWVLF), and 88 to 108 (LNPKGWVGVILLLAGMVMIKF).

This sequence belongs to the drug/metabolite transporter (DMT) superfamily. Small multidrug resistance (SMR) (TC 2.A.7.1) family. MdtI subfamily. As to quaternary structure, forms a complex with MdtJ.

Its subcellular location is the cell inner membrane. Functionally, catalyzes the excretion of spermidine. This chain is Spermidine export protein MdtI, found in Salmonella choleraesuis (strain SC-B67).